The sequence spans 141 residues: Hydroperoxide reductase (141 aa).

Belongs to the OsmC/Ohr family. Homodimer.

Its subcellular location is the cytoplasm. Reduces organic and inorganic peroxide substrates. Protects the cell against oxidative stress. In Mycoplasma genitalium (strain ATCC 33530 / DSM 19775 / NCTC 10195 / G37) (Mycoplasmoides genitalium), this protein is Hydroperoxide reductase.